Here is a 158-residue protein sequence, read N- to C-terminus: Lipoprotein signal peptidase (158 aa).

4 consecutive transmembrane segments (helical) span residues 7–27, 38–58, 67–87, and 95–115; these read LFWIAAFIAFFVDQLTKYWVV, ILPGIFHFTYVTNTGAAFSLF, WLSLGVSLLLIGLALLGPVLE, and GLILGGAMGNGIDRFALGYVV. Catalysis depends on residues D116 and D132. The helical transmembrane segment at 125-145 threads the bilayer; sequence FAVFNMADSFISIGIVCLLLA.

Belongs to the peptidase A8 family.

The protein resides in the cell inner membrane. It carries out the reaction Release of signal peptides from bacterial membrane prolipoproteins. Hydrolyzes -Xaa-Yaa-Zaa-|-(S,diacylglyceryl)Cys-, in which Xaa is hydrophobic (preferably Leu), and Yaa (Ala or Ser) and Zaa (Gly or Ala) have small, neutral side chains.. It functions in the pathway protein modification; lipoprotein biosynthesis (signal peptide cleavage). This protein specifically catalyzes the removal of signal peptides from prolipoproteins. The chain is Lipoprotein signal peptidase from Trichormus variabilis (strain ATCC 29413 / PCC 7937) (Anabaena variabilis).